The chain runs to 599 residues: Elongation factor 4 (599 aa).

The tr-type G domain occupies 2–184 (KNIRNFSIIA…RLVRDIPPPE (183 aa)). GTP-binding positions include 14-19 (DHGKST) and 131-134 (NKID).

The protein belongs to the TRAFAC class translation factor GTPase superfamily. Classic translation factor GTPase family. LepA subfamily.

The protein localises to the cell inner membrane. The enzyme catalyses GTP + H2O = GDP + phosphate + H(+). Its function is as follows. Required for accurate and efficient protein synthesis under certain stress conditions. May act as a fidelity factor of the translation reaction, by catalyzing a one-codon backward translocation of tRNAs on improperly translocated ribosomes. Back-translocation proceeds from a post-translocation (POST) complex to a pre-translocation (PRE) complex, thus giving elongation factor G a second chance to translocate the tRNAs correctly. Binds to ribosomes in a GTP-dependent manner. This chain is Elongation factor 4, found in Klebsiella pneumoniae (strain 342).